The following is a 766-amino-acid chain: NADH-dependent flavin oxidoreductase iliE (766 aa).

The segment covering 1-13 (MSEQLGSHITTPS) has biased composition (polar residues). The disordered stretch occupies residues 1–24 (MSEQLGSHITTPSSHDDASKDKRP). Basic and acidic residues predominate over residues 14–24 (SHDDASKDKRP). An N-linked (GlcNAc...) asparagine glycan is attached at N30. 61–64 (AATA) is a binding site for FMN. Residues N70 and N136 are each glycosylated (N-linked (GlcNAc...) asparagine). Residue Q143 participates in FMN binding. 224–227 (HAGH) is a binding site for substrate. 385-386 (AR) is an FMN binding site. One can recognise a J domain in the interval 551–622 (TPYDILAMRK…SKRSLYDTQG (72 aa)). Residues N634, N650, and N654 are each glycosylated (N-linked (GlcNAc...) asparagine). A helical membrane pass occupies residues 675–695 (MYMSNGVFATLVVMMCMIGAF).

This sequence belongs to the NADH:flavin oxidoreductase/NADH oxidase family.

It localises to the membrane. Functionally, NADH-dependent flavin oxidoreductase; part of the gene cluster that mediates the biosynthesis of ilicicolin H, a 4-hydroxy-2-pyridonealkaloid that has potent and broad antifungal activities by inhibiting the mitochondrial respiration chain. The biosynthesis of ilicicolin H starts with formation of the tetramic acid by the hybrid PKS-NRPS synthetase iliA with the partnering trans-enoyl reductase iliB since iliA lacks a designated enoylreductase (ER) domain. The cytochrome P450 monooxygenase iliC then catalyzes the ring expansion of the tetramate to the acyclic 2-pyridone. The pericyclase iliD further converts the acyclic 2-pyridone into 8-epi-ilicicolin H. 8-epi-ilicicolin H might then spontaneously convert to ilicicolin H since ilicicolin H is produced in the absence of the epimerase iliE, in contrast to what was observed for the Talaromyces variabilis ilicolin H biosynthetic pathway. The chain is NADH-dependent flavin oxidoreductase iliE from Neonectria sp. (strain DH2).